The chain runs to 356 residues: Inositol phosphoceramide mannosyltransferase 3 (356 aa).

A helical transmembrane segment spans residues 4 to 24 (ILFYFFFFLTLILSATVYLFG). N-linked (GlcNAc...) asparagine glycosylation is found at Asn52 and Asn146. The next 2 membrane-spanning stretches (helical) occupy residues 197-217 (FPYL…IWSA) and 269-289 (WAIF…FIFG). Phosphoserine occurs at positions 307, 353, and 355.

Belongs to the glycosyltransferase 32 family.

It localises to the endoplasmic reticulum membrane. Its subcellular location is the golgi apparatus. The protein resides in the cis-Golgi network membrane. It is found in the trans-Golgi network membrane. In terms of biological role, with imt1 and imt2, is required for the synthesis of mannosylinositol phosphoceramide (MIPC). Catalyzes the addition of mannosyl to inositol phosphoceramide (IPC). MIPC is essential for cell morphology, cell-surface distribution of ergosterol, localization for plasma-membrane transporters, and lipid-raft-mediated endocytosis of plasma membrane proteins to the vacuole. The polypeptide is Inositol phosphoceramide mannosyltransferase 3 (Schizosaccharomyces pombe (strain 972 / ATCC 24843) (Fission yeast)).